The sequence spans 259 residues: Protein-tyrosine phosphatase RolB (259 aa).

The tract at residues 219-259 (GISRPAASSPEPDLTLRLSGPDQEGEEGVMKPAAVNLKKEA) is disordered.

It carries out the reaction O-phospho-L-tyrosyl-[protein] + H2O = L-tyrosyl-[protein] + phosphate. Functionally, induces differentiation and growth of neoplastic roots (hairy roots). Seems to function as a tyrosine phosphatase. This chain is Protein-tyrosine phosphatase RolB (rolB), found in Rhizobium rhizogenes (Agrobacterium rhizogenes).